We begin with the raw amino-acid sequence, 85 residues long: COMM domain-containing protein 6 (85 aa).

Met-1 is modified (N-acetylmethionine). One can recognise a COMM domain in the interval 18-85 (QLVDFQWKLG…KEIAAVIETV (68 aa)).

Belongs to the COMM domain-containing protein 6 family. In terms of assembly, component of the commander complex consisting of the CCC subcomplex and the retriever subcomplex. Component of the CCC (COMMD/CCDC22/CCDC93) subcomplex consisting of COMMD1, COMMD2, COMMD3, COMMD4, COMMD5, COMMD6, COMMD7, COMMD8, COMMD9, COMMD10, CCDC22 and CCDC93; within the complex forms a heterodimer with COMMD1. May form a homodimer with isoform 1. Interacts with RELA, RELB, NFKB1/p105. Does not interact with NFKBIB. Interacts with CCDC22, CCDC93, SCNN1B, CUL4A. As to expression, ubiquitous. Expressed in brain, heart, skeletal muscle, lung, pancreas, liver, kidney, small intestine and placenta.

The protein localises to the nucleus. The protein resides in the cytoplasm. Its function is as follows. Scaffold protein in the commander complex that is essential for endosomal recycling of transmembrane cargos; the commander complex is composed of the CCC subcomplex and the retriever subcomplex. May modulate activity of cullin-RING E3 ubiquitin ligase (CRL) complexes. Down-regulates activation of NF-kappa-B. Inhibits TNF-induced NFKB1 activation. The polypeptide is COMM domain-containing protein 6 (COMMD6) (Homo sapiens (Human)).